A 304-amino-acid chain; its full sequence is Large ribosomal subunit protein uL18 (304 aa).

The disordered stretch occupies residues Leu285 to Glu304. The span at Ala294 to Glu304 shows a compositional bias: acidic residues.

This sequence belongs to the universal ribosomal protein uL18 family. As to quaternary structure, component of the large ribosomal subunit (LSU).

It localises to the cytoplasm. It is found in the nucleus. Its function is as follows. Component of the ribosome, a large ribonucleoprotein complex responsible for the synthesis of proteins in the cell. The small ribosomal subunit (SSU) binds messenger RNAs (mRNAs) and translates the encoded message by selecting cognate aminoacyl-transfer RNA (tRNA) molecules. The large subunit (LSU) contains the ribosomal catalytic site termed the peptidyl transferase center (PTC), which catalyzes the formation of peptide bonds, thereby polymerizing the amino acids delivered by tRNAs into a polypeptide chain. The nascent polypeptides leave the ribosome through a tunnel in the LSU and interact with protein factors that function in enzymatic processing, targeting, and the membrane insertion of nascent chains at the exit of the ribosomal tunnel. The sequence is that of Large ribosomal subunit protein uL18 (RPL5A) from Oryza sativa subsp. indica (Rice).